The sequence spans 193 residues: Rho-related GTP-binding protein RhoA-C (193 aa).

Residues Gly12 to Thr19, Phe30 to Thr37, Asp59 to Gln63, Asn117 to Asp120, and Ser160 to Lys162 contribute to the GTP site. A glycan ((Microbial infection) O-linked (GlcNAc) tyrosine; by Yersinia Afp18) is linked at Tyr34. Residue Cys190 is modified to Cysteine methyl ester. Cys190 is lipidated: S-geranylgeranyl cysteine. Residues Leu191–Leu193 constitute a propeptide, removed in mature form.

The protein belongs to the small GTPase superfamily. Rho family. Post-translationally, (Microbial infection) Glycosylated at Tyr-34 by Yersinia ruckeri toxin Afp18. Mono-O-GlcNAcylation by Afp18 inhibits RhoA activation by guanine nucleotide exchange factors and blocks RhoA signaling.

The protein resides in the cell membrane. In terms of biological role, regulates a signal transduction pathway linking plasma membrane receptors to the assembly of focal adhesions and actin stress fibers. The polypeptide is Rho-related GTP-binding protein RhoA-C (Danio rerio (Zebrafish)).